Consider the following 173-residue polypeptide: Ribosome maturation factor RimM (173 aa).

Residues 94–166 (VQEEPYIDII…KIIVELPMGF (73 aa)) form the PRC barrel domain.

It belongs to the RimM family. In terms of assembly, binds ribosomal protein uS19.

It is found in the cytoplasm. In terms of biological role, an accessory protein needed during the final step in the assembly of 30S ribosomal subunit, possibly for assembly of the head region. Essential for efficient processing of 16S rRNA. May be needed both before and after RbfA during the maturation of 16S rRNA. It has affinity for free ribosomal 30S subunits but not for 70S ribosomes. In Amoebophilus asiaticus (strain 5a2), this protein is Ribosome maturation factor RimM.